Reading from the N-terminus, the 474-residue chain is Aspartyl protease family protein At5g10770 (474 aa).

The N-terminal stretch at 1–25 (MSINRNLLNIIIILCICLNLGCNDG) is a signal peptide. A Peptidase A1 domain is found at 132 to 469 (YIVTVGLGTP…DGAGGRVGFA (338 aa)). Residues aspartate 150 and aspartate 352 contribute to the active site. Cysteine 391 and cysteine 432 are oxidised to a cystine. Asparagine 443 is lipidated: GPI-anchor amidated asparagine. A propeptide spans 444–474 (AAIFGNVQQQTLEVVYDGAGGRVGFAPNGCS) (removed in mature form).

This sequence belongs to the peptidase A1 family.

The protein resides in the cell membrane. Its function is as follows. Probably not redundant with AED1 and not involved in restriction of salicylic acid (SA) or systemic acquired resistance (SAR) signaling. The polypeptide is Aspartyl protease family protein At5g10770 (Arabidopsis thaliana (Mouse-ear cress)).